The primary structure comprises 228 residues: tRNA (guanine-N(1)-)-methyltransferase (228 aa).

S-adenosyl-L-methionine is bound by residues Gly-108 and 127–132 (VGDFIL).

It belongs to the RNA methyltransferase TrmD family. In terms of assembly, homodimer.

It is found in the cytoplasm. The enzyme catalyses guanosine(37) in tRNA + S-adenosyl-L-methionine = N(1)-methylguanosine(37) in tRNA + S-adenosyl-L-homocysteine + H(+). Its function is as follows. Specifically methylates guanosine-37 in various tRNAs. This Metamycoplasma arthritidis (strain 158L3-1) (Mycoplasma arthritidis) protein is tRNA (guanine-N(1)-)-methyltransferase.